The primary structure comprises 303 residues: Centromere protein O (303 aa).

Residues 38–77 (AALRKNQELVLELRKKRDELKAKIERHKAEIQAFRGREEA) adopt a coiled-coil conformation.

Belongs to the CENP-O/MCM21 family.

Its subcellular location is the nucleus. The protein resides in the chromosome. It is found in the centromere. In terms of biological role, probable component of a centromeric complex involved in assembly of kinetochore proteins, mitotic progression and chromosome segregation. In Xenopus tropicalis (Western clawed frog), this protein is Centromere protein O (cenpo).